The chain runs to 46 residues: Large ribosomal subunit protein bL36B (46 aa).

The protein belongs to the bacterial ribosomal protein bL36 family.

This is Large ribosomal subunit protein bL36B from Cronobacter sakazakii (strain ATCC BAA-894) (Enterobacter sakazakii).